The sequence spans 216 residues: Large ribosomal subunit protein uL24m (216 aa).

The transit peptide at 1 to 9 (MRLSALLAL) directs the protein to the mitochondrion. Ser-24 is modified (phosphoserine). Residues 56–89 (LFCGDMVEILEGKDAGKQGKVVQVVRQRNWVVLE) enclose the KOW domain.

This sequence belongs to the universal ribosomal protein uL24 family. As to quaternary structure, component of the mitochondrial ribosome large subunit (39S) which comprises a 16S rRNA and about 50 distinct proteins.

It localises to the mitochondrion. The chain is Large ribosomal subunit protein uL24m (Mrpl24) from Mus musculus (Mouse).